The sequence spans 1241 residues: Intraflagellar transport protein 122 homolog (1241 aa).

WD repeat units lie at residues 10–50, 51–91, 93–129, and 131–169; these read KAEH…QPLK, GHKD…LKYT, NDAIQCVSYNPITHQLASCSSSDFGLWSPEQKSVSKH, and SSSKIICCSWTNDGQYLALGMFNGIISIRNKNGEEKVKI. The tract at residues 222 to 246 is disordered; the sequence is VYSSQGSEAEEEEPEEEDDSPRDDN. Over residues 229 to 242 the composition is skewed to acidic residues; that stretch reads EAEEEEPEEEDDSP. 3 WD repeats span residues 278–317, 319–359, and 512–551; these read ALNFDPCCISYFTKGEYILLGGSDKQVSLFTKDGVRLGTV, EQNS…HGLY, and KQATAVRCLDMSASRKKLAVVDENDTCLVYDIDTKELLFQ.

In terms of assembly, component of the IFT complex A (IFT-A) complex. IFT-A complex is divided into a core subcomplex composed of IFT122:IFT140:WDR19 which is associated with TULP3 and a peripheral subcomplex composed of IFT43:WDR35:TTC21B. Interacts with IFT43:WDR35; the interaction connects the 2 IFT-A subcomplexes. Interacts with IFTAP; the interaction associates IFTAP with IFT-A complex. As to expression, expressed in many tissues. Predominant expression in testis and pituitary.

The protein resides in the cell projection. The protein localises to the cilium. Its subcellular location is the cytoplasm. It is found in the cytoskeleton. It localises to the cilium basal body. As a component of the IFT complex A (IFT-A), a complex required for retrograde ciliary transport and entry into cilia of G protein-coupled receptors (GPCRs), it is required in ciliogenesis and ciliary protein trafficking. Involved in cilia formation during neuronal patterning. Acts as a negative regulator of Shh signaling. Required to recruit TULP3 to primary cilia. The chain is Intraflagellar transport protein 122 homolog from Homo sapiens (Human).